The primary structure comprises 1444 residues: Protein shortage in chiasmata 1 ortholog (1444 aa).

A compositionally biased stretch (low complexity) spans 1106-1117; sequence SITKSPQISSPQ. Positions 1106–1129 are disordered; the sequence is SITKSPQISSPQENRNQISTLSSQ.

It belongs to the XPF family. Highly divergent. In terms of assembly, interacts with TEX11. Interacts with SPO16.

The protein resides in the chromosome. Its function is as follows. ATPase required during meiosis for the formation of crossover recombination intermediates. Binds DNA: preferentially binds to single-stranded DNA and DNA branched structures. Does not show nuclease activity in vitro, but shows ATPase activity, which is stimulated by the presence of single-stranded DNA. Plays a key role in homologous recombination and crossing-over in meiotic prophase I in male and female germ cells. Required for proper synaptonemal complex assembly and homologous chromosome pairing. Requiref for recruitment TEX11 and MSH4 to recombination intermediates. This is Protein shortage in chiasmata 1 ortholog from Homo sapiens (Human).